Here is a 150-residue protein sequence, read N- to C-terminus: 3-hydroxyacyl-[acyl-carrier-protein] dehydratase FabZ (150 aa).

The active site involves H52.

It belongs to the thioester dehydratase family. FabZ subfamily.

The protein localises to the cytoplasm. It carries out the reaction a (3R)-hydroxyacyl-[ACP] = a (2E)-enoyl-[ACP] + H2O. Functionally, involved in unsaturated fatty acids biosynthesis. Catalyzes the dehydration of short chain beta-hydroxyacyl-ACPs and long chain saturated and unsaturated beta-hydroxyacyl-ACPs. In Variovorax paradoxus (strain S110), this protein is 3-hydroxyacyl-[acyl-carrier-protein] dehydratase FabZ.